Consider the following 456-residue polypeptide: RUN domain-containing protein 3B (456 aa).

A disordered region spans residues 1–24 (MASRSLGGLSGIRGGGGGGGKKSL). Residues 8 to 21 (GLSGIRGGGGGGGK) show a composition bias toward gly residues. Position 13 is an omega-N-methylarginine (arginine 13). An RUN domain is found at 57-189 (DDSSPEFNNF…IDFSFCLKGE (133 aa)). Phosphoserine occurs at positions 215 and 216. The tract at residues 216-237 (SDEEELRTLGSSGSESSTPENV) is disordered. Polar residues predominate over residues 224–235 (LGSSGSESSTPE). Residues 300–325 (AHKLEKEQLEYIIVELQDQLTVLKNN) adopt a coiled-coil conformation. A compositionally biased stretch (polar residues) spans 382–405 (SLSQTSLDPGQSQEGDGKQDTLNV). A disordered region spans residues 382 to 411 (SLSQTSLDPGQSQEGDGKQDTLNVMSEGKE).

Belongs to the RUNDC3 family. In terms of assembly, interacts with RAP2A.

The protein is RUN domain-containing protein 3B (RUNDC3B) of Pongo abelii (Sumatran orangutan).